Consider the following 302-residue polypeptide: Protein translocase subunit SecF (302 aa).

The next 6 helical transmembrane spans lie at 12-32 (FFIYLSIALILFSVIVIFVKG), 138-158 (YAWYAVIISLIVLLAYITIRF), 166-186 (AILALAHDVIITLGFYSLFGI), 190-210 (LTAIAAFLTLAGYSLNDTIVV), 249-269 (FLVVFMMFLLGGRSIASFAFG), and 272-292 (VGVIIGTYSSLYIASPIVIGM).

The protein belongs to the SecD/SecF family. SecF subfamily. Forms a complex with SecD. Part of the essential Sec protein translocation apparatus which comprises SecA, SecYEG and auxiliary proteins SecDF. Other proteins may also be involved.

Its subcellular location is the cell inner membrane. Part of the Sec protein translocase complex. Interacts with the SecYEG preprotein conducting channel. SecDF uses the proton motive force (PMF) to complete protein translocation after the ATP-dependent function of SecA. This is Protein translocase subunit SecF from Petrotoga mobilis (strain DSM 10674 / SJ95).